Here is a 280-residue protein sequence, read N- to C-terminus: Fructose-1,6-bisphosphatase class 1 (280 aa).

Residues E64, D83, L85, and D86 each coordinate Mg(2+). Residues D86–S89, Y189, and K220 each bind substrate. E226 serves as a coordination point for Mg(2+).

This sequence belongs to the FBPase class 1 family. Homotetramer. It depends on Mg(2+) as a cofactor.

It localises to the cytoplasm. The catalysed reaction is beta-D-fructose 1,6-bisphosphate + H2O = beta-D-fructose 6-phosphate + phosphate. It functions in the pathway carbohydrate biosynthesis; gluconeogenesis. This chain is Fructose-1,6-bisphosphatase class 1, found in Campylobacter jejuni (strain RM1221).